The primary structure comprises 28 residues: Turritoxin F21-2 (28 aa).

Expressed by the venom duct.

Its subcellular location is the secreted. Functionally, potent inhibitor of human alpha-3-beta-2 nAChRs (IC(50)=566.2 nM). Irreversibly inhibits the acetylcholine-induced response on human alpha-7/CHRNA7 (55% inhibition at 5.6 uM) and alpha-3-beta-2/CHRNA3-CHRNB2 (91% inhibition) nAChRs. In Polystira nobilis (Sea snail), this protein is Turritoxin F21-2.